The sequence spans 233 residues: Small ribosomal subunit protein uS7m (233 aa).

The N-terminal 28 residues, 1–28, are a transit peptide targeting the mitochondrion; sequence MAAPTGKLLVHRIRAGLTCLTQVRWSRY.

It belongs to the universal ribosomal protein uS7 family. Component of the mitochondrial ribosome small subunit (28S) which comprises a 12S rRNA and about 30 distinct proteins.

The protein localises to the mitochondrion. This Xenopus laevis (African clawed frog) protein is Small ribosomal subunit protein uS7m (mrps7).